Here is a 490-residue protein sequence, read N- to C-terminus: tRNA-guanine(15) transglycosylase (490 aa).

D90 functions as the Nucleophile in the catalytic mechanism. 2 residues coordinate substrate: D125 and A193. Zn(2+)-binding residues include C276, C278, and C281.

This sequence belongs to the archaeosine tRNA-ribosyltransferase family. The cofactor is Zn(2+).

It catalyses the reaction guanosine(15) in tRNA + 7-cyano-7-deazaguanine = 7-cyano-7-carbaguanosine(15) in tRNA + guanine. The protein operates within tRNA modification; archaeosine-tRNA biosynthesis. In terms of biological role, exchanges the guanine residue with 7-cyano-7-deazaguanine (preQ0) at position 15 in the dihydrouridine loop (D-loop) of archaeal tRNAs. The sequence is that of tRNA-guanine(15) transglycosylase from Methanosarcina barkeri (strain Fusaro / DSM 804).